The chain runs to 269 residues: HTH-type transcriptional activator ArnR1 (269 aa).

Over 1–217 (MSSMNKRVFD…LLKLTGSYRY (217 aa)) the chain is Cytoplasmic. Residues 42–65 (TTEISQTINTSRKSIIDAIRKLVD) constitute a DNA-binding region (H-T-H motif). The chain crosses the membrane as a helical span at residues 218 to 238 (EIALTKVMLFNVISIPVLMYL). Topologically, residues 239-241 (KDQ) are extracellular. The helical transmembrane segment at 242 to 262 (LGILEAIWLYVIILLPLLSIF) threads the bilayer. Topologically, residues 263–269 (AEIFNRI) are cytoplasmic.

Its subcellular location is the cell membrane. Its function is as follows. Involved in regulation of archaellar gene expression. May activate flaB transcription upon nutrient starvation by acting on the flaB promoter. This chain is HTH-type transcriptional activator ArnR1, found in Sulfolobus acidocaldarius (strain ATCC 33909 / DSM 639 / JCM 8929 / NBRC 15157 / NCIMB 11770).